The sequence spans 117 residues: MNTKQSRIRRARKTRAKIAAVKAIRLAIHRTNSHIYAQIISADGGTVMASASSNDKDLRGQLANGGTTAAAAAVGKRLAEKAKGLGIEKVAFDRAGFKFHGRVKALAEAAREGGLAF.

The protein belongs to the universal ribosomal protein uL18 family. As to quaternary structure, part of the 50S ribosomal subunit; part of the 5S rRNA/L5/L18/L25 subcomplex. Contacts the 5S and 23S rRNAs.

In terms of biological role, this is one of the proteins that bind and probably mediate the attachment of the 5S RNA into the large ribosomal subunit, where it forms part of the central protuberance. This is Large ribosomal subunit protein uL18 from Thiobacillus denitrificans (strain ATCC 25259 / T1).